A 44-amino-acid chain; its full sequence is MNELTLIDFYLCFLAFLLFLVLIMLIIFWFSLEIQDLEEPCTKV.

A helical membrane pass occupies residues 9 to 29 (FYLCFLAFLLFLVLIMLIIFW).

It localises to the host membrane. The chain is Protein non-structural 7b from Homo sapiens (Human).